A 361-amino-acid chain; its full sequence is UDP-N-acetylglucosamine--N-acetylmuramyl-(pentapeptide) pyrophosphoryl-undecaprenol N-acetylglucosamine transferase (361 aa).

Residues 12–14 (TGG), Asn123, Arg166, Ser192, and Gln293 contribute to the UDP-N-acetyl-alpha-D-glucosamine site.

It belongs to the glycosyltransferase 28 family. MurG subfamily.

It localises to the cell inner membrane. The enzyme catalyses di-trans,octa-cis-undecaprenyl diphospho-N-acetyl-alpha-D-muramoyl-L-alanyl-D-glutamyl-meso-2,6-diaminopimeloyl-D-alanyl-D-alanine + UDP-N-acetyl-alpha-D-glucosamine = di-trans,octa-cis-undecaprenyl diphospho-[N-acetyl-alpha-D-glucosaminyl-(1-&gt;4)]-N-acetyl-alpha-D-muramoyl-L-alanyl-D-glutamyl-meso-2,6-diaminopimeloyl-D-alanyl-D-alanine + UDP + H(+). The protein operates within cell wall biogenesis; peptidoglycan biosynthesis. Cell wall formation. Catalyzes the transfer of a GlcNAc subunit on undecaprenyl-pyrophosphoryl-MurNAc-pentapeptide (lipid intermediate I) to form undecaprenyl-pyrophosphoryl-MurNAc-(pentapeptide)GlcNAc (lipid intermediate II). In Caulobacter vibrioides (strain ATCC 19089 / CIP 103742 / CB 15) (Caulobacter crescentus), this protein is UDP-N-acetylglucosamine--N-acetylmuramyl-(pentapeptide) pyrophosphoryl-undecaprenol N-acetylglucosamine transferase.